The chain runs to 75 residues: Signaling peptide TAXIMIN 1 (75 aa).

Positions 1-29 (MCDGDCRPLGFLLGLPFAFLSLLLSIIGV) are cleaved as a signal peptide.

Expressed in shoot apical meristems (SAM); mostly specific to the L1 layer in the center of the meristem but also detected in the L2 layer in organ primordia. Also observed in the vasculature of seedling roots.

The protein resides in the secreted. With respect to regulation, counteracted by the antibiotic cefotaxime during responses to light stress. Signaling peptide involved in the regulation of lateral organs separation, including fruits and leaves. Involved in the perception of and response to light stress via the control of sinapoyl-malate accumulation, a UV-B protecting compound. The protein is Signaling peptide TAXIMIN 1 of Arabidopsis thaliana (Mouse-ear cress).